Here is a 403-residue protein sequence, read N- to C-terminus: Homoserine O-succinyltransferase (403 aa).

One can recognise an AB hydrolase-1 domain in the interval 58–366; that stretch reads NAVLICHALS…ESNHGHDAFL (309 aa). The active-site Nucleophile is the Ser-164. Arg-234 is a substrate binding site. Catalysis depends on residues Asp-329 and His-362. Asp-363 contributes to the substrate binding site.

Belongs to the AB hydrolase superfamily. MetX family. As to quaternary structure, homodimer.

The protein localises to the cytoplasm. It carries out the reaction L-homoserine + succinyl-CoA = O-succinyl-L-homoserine + CoA. The protein operates within amino-acid biosynthesis; L-methionine biosynthesis via de novo pathway; O-succinyl-L-homoserine from L-homoserine: step 1/1. Transfers a succinyl group from succinyl-CoA to L-homoserine, forming succinyl-L-homoserine. The sequence is that of Homoserine O-succinyltransferase from Halothiobacillus neapolitanus (strain ATCC 23641 / c2) (Thiobacillus neapolitanus).